The following is a 159-amino-acid chain: Large ribosomal subunit protein uL11 (159 aa).

This sequence belongs to the universal ribosomal protein uL11 family. Part of the ribosomal stalk of the 50S ribosomal subunit. Interacts with L10 and the large rRNA to form the base of the stalk. L10 forms an elongated spine to which L12 dimers bind in a sequential fashion forming a multimeric L10(L12)X complex.

Its function is as follows. Forms part of the ribosomal stalk which helps the ribosome interact with GTP-bound translation factors. This is Large ribosomal subunit protein uL11 from Methanothrix thermoacetophila (strain DSM 6194 / JCM 14653 / NBRC 101360 / PT) (Methanosaeta thermophila).